We begin with the raw amino-acid sequence, 428 residues long: Glutamate-1-semialdehyde 2,1-aminomutase (428 aa).

The residue at position 267 (K267) is an N6-(pyridoxal phosphate)lysine.

Belongs to the class-III pyridoxal-phosphate-dependent aminotransferase family. HemL subfamily. As to quaternary structure, homodimer. It depends on pyridoxal 5'-phosphate as a cofactor.

The protein resides in the cytoplasm. It catalyses the reaction (S)-4-amino-5-oxopentanoate = 5-aminolevulinate. Its pathway is porphyrin-containing compound metabolism; protoporphyrin-IX biosynthesis; 5-aminolevulinate from L-glutamyl-tRNA(Glu): step 2/2. The protein operates within porphyrin-containing compound metabolism; chlorophyll biosynthesis. This is Glutamate-1-semialdehyde 2,1-aminomutase from Prochlorococcus marinus (strain NATL1A).